The chain runs to 542 residues: uncharacterized protein (542 aa).

The next 5 membrane-spanning stretches (helical) occupy residues 4–23 (ILRDNPLLLLFIVAGIGYPL), 28–47 (IGGIHLGVAAVLFVGLAFGA), 57–79 (IVYQFGLALFVYCVGLSSGHGFL), 86–108 (GVIYNLLTLGVILLAAALLLIPH), and 151–173 (PVVGYSIAYPASVLGVILAIYLA). RCK C-terminal domains are found at residues 186-270 (RTLK…VIGC) and 273-356 (EVQA…LGDS). Helical transmembrane passes span 365 to 384 (IAVLGLGMALGIGLGLVPIP), 389 to 408 (ITVRLGLAGGPLIVALFLGA), 415 to 437 (LVWVLPYSANMLLRQMGLTIFLA), 457 to 479 (WAILGASAAIIVLLSWVMLYVGY), 484 to 506 (IPMGLLTGMVAGMQTQSATLGFA), and 519 to 541 (YAMVYPMAMVVKIVLAPVIIAVL).

This sequence belongs to the AAE transporter (TC 2.A.81) family.

It is found in the cell membrane. This is an uncharacterized protein from Symbiobacterium thermophilum (strain DSM 24528 / JCM 14929 / IAM 14863 / T).